A 526-amino-acid chain; its full sequence is Peptide chain release factor 3 (526 aa).

In terms of domain architecture, tr-type G spans 9-277 (DKRRTFAIIS…GIVEWAPKPL (269 aa)). GTP is bound by residues 18–25 (SHPDAGKT), 86–90 (DTPGH), and 140–143 (NKLD).

This sequence belongs to the TRAFAC class translation factor GTPase superfamily. Classic translation factor GTPase family. PrfC subfamily.

The protein resides in the cytoplasm. In terms of biological role, increases the formation of ribosomal termination complexes and stimulates activities of RF-1 and RF-2. It binds guanine nucleotides and has strong preference for UGA stop codons. It may interact directly with the ribosome. The stimulation of RF-1 and RF-2 is significantly reduced by GTP and GDP, but not by GMP. This Shewanella putrefaciens (strain CN-32 / ATCC BAA-453) protein is Peptide chain release factor 3.